The primary structure comprises 192 residues: Ion-translocating oxidoreductase complex subunit A (192 aa).

The next 6 helical transmembrane spans lie at 5-25 (LLLLISTVLVNNFVLVKFLGL), 39-59 (IGMSMATTFVLTLASILSYLV), 65-85 (LPFDLGYLRTMSFILVIAVVV), 102-122 (ALGIYLPLITTNCAVLGVALL), 134-154 (AIYGFGAAVGFSLVLILFSAM), and 171-191 (AIAMITAGLMSLAFMGFTGLV).

The protein belongs to the NqrDE/RnfAE family. In terms of assembly, the complex is composed of six subunits: RnfA, RnfB, RnfC, RnfD, RnfE and RnfG.

It localises to the cell inner membrane. Functionally, part of a membrane-bound complex that couples electron transfer with translocation of ions across the membrane. The protein is Ion-translocating oxidoreductase complex subunit A of Shewanella sp. (strain MR-4).